A 316-amino-acid polypeptide reads, in one-letter code: 4-hydroxy-3-methylbut-2-enyl diphosphate reductase (316 aa).

Cys12 provides a ligand contact to [4Fe-4S] cluster. (2E)-4-hydroxy-3-methylbut-2-enyl diphosphate is bound by residues His41 and His74. Dimethylallyl diphosphate contacts are provided by His41 and His74. 2 residues coordinate isopentenyl diphosphate: His41 and His74. Cys96 provides a ligand contact to [4Fe-4S] cluster. His124 contributes to the (2E)-4-hydroxy-3-methylbut-2-enyl diphosphate binding site. His124 provides a ligand contact to dimethylallyl diphosphate. Position 124 (His124) interacts with isopentenyl diphosphate. Glu126 serves as the catalytic Proton donor. Thr167 lines the (2E)-4-hydroxy-3-methylbut-2-enyl diphosphate pocket. Cys197 serves as a coordination point for [4Fe-4S] cluster. Residues Ser225, Ser226, Asn227, and Ser269 each contribute to the (2E)-4-hydroxy-3-methylbut-2-enyl diphosphate site. Ser225, Ser226, Asn227, and Ser269 together coordinate dimethylallyl diphosphate. 4 residues coordinate isopentenyl diphosphate: Ser225, Ser226, Asn227, and Ser269.

Belongs to the IspH family. Homodimer. Requires [4Fe-4S] cluster as cofactor.

The enzyme catalyses isopentenyl diphosphate + 2 oxidized [2Fe-2S]-[ferredoxin] + H2O = (2E)-4-hydroxy-3-methylbut-2-enyl diphosphate + 2 reduced [2Fe-2S]-[ferredoxin] + 2 H(+). It catalyses the reaction dimethylallyl diphosphate + 2 oxidized [2Fe-2S]-[ferredoxin] + H2O = (2E)-4-hydroxy-3-methylbut-2-enyl diphosphate + 2 reduced [2Fe-2S]-[ferredoxin] + 2 H(+). The protein operates within isoprenoid biosynthesis; dimethylallyl diphosphate biosynthesis; dimethylallyl diphosphate from (2E)-4-hydroxy-3-methylbutenyl diphosphate: step 1/1. It participates in isoprenoid biosynthesis; isopentenyl diphosphate biosynthesis via DXP pathway; isopentenyl diphosphate from 1-deoxy-D-xylulose 5-phosphate: step 6/6. Catalyzes the conversion of 1-hydroxy-2-methyl-2-(E)-butenyl 4-diphosphate (HMBPP) into a mixture of isopentenyl diphosphate (IPP) and dimethylallyl diphosphate (DMAPP). Acts in the terminal step of the DOXP/MEP pathway for isoprenoid precursor biosynthesis. The protein is 4-hydroxy-3-methylbut-2-enyl diphosphate reductase of Sodalis glossinidius (strain morsitans).